A 180-amino-acid polypeptide reads, in one-letter code: UPF0149 protein XOO1028 (180 aa).

Belongs to the UPF0149 family.

This is UPF0149 protein XOO1028 from Xanthomonas oryzae pv. oryzae (strain MAFF 311018).